The chain runs to 255 residues: FMR1 neighbor protein (255 aa).

At 1–68 (MSSHRRKAKG…ESLKMRVSKP (68 aa)) the chain is on the cytoplasmic side. A helical transmembrane segment spans residues 69 to 89 (FGMLMLSIWILLFVCYYLSYY). Over 90-183 (LCSGSSYFVL…FAPFRDVPKQ (94 aa)) the chain is Extracellular. In terms of domain architecture, P-type spans 125–184 (LLNFFFPTTCNLRENQVAKPCNELQDLSESECLRHKCCFSSSGTTSFKCFAPFRDVPKQM). The chain crosses the membrane as a helical span at residues 184-204 (MMQMFGLGAISLILVCLPIYC). Topologically, residues 205–255 (RSLFWRSEPADDLQRQDNRVVTGLKKQRRKRKRKSEMLQKAARGREEHGDE) are cytoplasmic. The interval 220-255 (QDNRVVTGLKKQRRKRKRKSEMLQKAARGREEHGDE) is disordered. A compositionally biased stretch (basic residues) spans 229 to 238 (KKQRRKRKRK).

In terms of tissue distribution, testis-specific. Expressed in melanoma, sarcoma, lung, breast, bladder, esophageal and ovarian cancers.

The protein resides in the membrane. This is FMR1 neighbor protein from Homo sapiens (Human).